Consider the following 202-residue polypeptide: Josephin-1 (202 aa).

The interval 1–22 (MSCVPWKGDKAKAESSDLPQAA) is disordered. Ser15 is subject to Phosphoserine. Positions 23–202 (PPQIYHEKQR…EAHQSWRADV (180 aa)) constitute a Josephin domain. Catalysis depends on Cys36, which acts as the Nucleophile. His139 acts as the Proton acceptor in catalysis.

In terms of assembly, interacts with beta-actin/ACTB. Post-translationally, monoubiquitinated. Ubiquitination activates deubiquitination activity in vitro. As to expression, widely expressed (at protein level).

Its subcellular location is the cell membrane. The protein resides in the cytoplasm. It catalyses the reaction Thiol-dependent hydrolysis of ester, thioester, amide, peptide and isopeptide bonds formed by the C-terminal Gly of ubiquitin (a 76-residue protein attached to proteins as an intracellular targeting signal).. Deubiquitinates monoubiquitinated probes (in vitro). When ubiquitinated, cleaves 'Lys-63'-linked and 'Lys-48'-linked poly-ubiquitin chains (in vitro), hence may act as a deubiquitinating enzyme. May increase macropinocytosis and suppress clathrin- and caveolae-mediated endocytosis. May enhance membrane dynamics and cell motility independently of its catalytic activity. The protein is Josephin-1 (Josd1) of Mus musculus (Mouse).